The primary structure comprises 157 residues: Small ribosomal subunit protein uS13 (157 aa).

The protein belongs to the universal ribosomal protein uS13 family. Part of the 30S ribosomal subunit. Forms a loose heterodimer with protein S19. Forms two bridges to the 50S subunit in the 70S ribosome.

Functionally, located at the top of the head of the 30S subunit, it contacts several helices of the 16S rRNA. In the 70S ribosome it contacts the 23S rRNA (bridge B1a) and protein L5 of the 50S subunit (bridge B1b), connecting the 2 subunits; these bridges are implicated in subunit movement. The protein is Small ribosomal subunit protein uS13 of Thermofilum pendens (strain DSM 2475 / Hrk 5).